We begin with the raw amino-acid sequence, 230 residues long: Uracil-DNA glycosylase (230 aa).

The Proton acceptor role is filled by aspartate 70.

The protein belongs to the uracil-DNA glycosylase (UDG) superfamily. UNG family.

Its subcellular location is the cytoplasm. The catalysed reaction is Hydrolyzes single-stranded DNA or mismatched double-stranded DNA and polynucleotides, releasing free uracil.. Its function is as follows. Excises uracil residues from the DNA which can arise as a result of misincorporation of dUMP residues by DNA polymerase or due to deamination of cytosine. In Pseudomonas putida (strain ATCC 700007 / DSM 6899 / JCM 31910 / BCRC 17059 / LMG 24140 / F1), this protein is Uracil-DNA glycosylase.